The primary structure comprises 63 residues: MSKKAPAQKKLPRAAAWYEIDMQKGVFRFKNKLCPKCGSVMAFHREPVPRWHCGKCGFTQFQR.

Zn(2+) contacts are provided by cysteine 34, cysteine 37, cysteine 53, and cysteine 56. The C4-type zinc-finger motif lies at 34-56 (CPKCGSVMAFHREPVPRWHCGKC).

Belongs to the eukaryotic ribosomal protein eS31 family. In terms of assembly, part of the 30S ribosomal subunit. It depends on Zn(2+) as a cofactor.

This is Small ribosomal subunit protein eS31 from Pyrobaculum neutrophilum (strain DSM 2338 / JCM 9278 / NBRC 100436 / V24Sta) (Thermoproteus neutrophilus).